Here is a 141-residue protein sequence, read N- to C-terminus: Ribonuclease P protein component (141 aa).

Disordered stretches follow at residues 37–56 (RTEEESNAAKTGDNPRVGFT) and 114–141 (RRITAKGERRSGGKRRTERPEPGPVNGK). A compositionally biased stretch (basic and acidic residues) spans 114–124 (RRITAKGERRS).

Belongs to the RnpA family. Consists of a catalytic RNA component (M1 or rnpB) and a protein subunit.

The catalysed reaction is Endonucleolytic cleavage of RNA, removing 5'-extranucleotides from tRNA precursor.. Its function is as follows. RNaseP catalyzes the removal of the 5'-leader sequence from pre-tRNA to produce the mature 5'-terminus. It can also cleave other RNA substrates such as 4.5S RNA. The protein component plays an auxiliary but essential role in vivo by binding to the 5'-leader sequence and broadening the substrate specificity of the ribozyme. The sequence is that of Ribonuclease P protein component from Brucella melitensis biotype 1 (strain ATCC 23456 / CCUG 17765 / NCTC 10094 / 16M).